A 147-amino-acid chain; its full sequence is Nucleoside diphosphate kinase (147 aa).

The ATP site is built by lysine 9, phenylalanine 57, arginine 85, threonine 91, arginine 102, and asparagine 112. Threonine 91 is modified (phosphothreonine). Catalysis depends on histidine 115, which acts as the Pros-phosphohistidine intermediate. Position 122 is a phosphoserine (serine 122).

The protein belongs to the NDK family. In terms of assembly, homotetramer. Mg(2+) is required as a cofactor.

The protein localises to the cytoplasm. The catalysed reaction is a 2'-deoxyribonucleoside 5'-diphosphate + ATP = a 2'-deoxyribonucleoside 5'-triphosphate + ADP. It catalyses the reaction a ribonucleoside 5'-diphosphate + ATP = a ribonucleoside 5'-triphosphate + ADP. Major role in the synthesis of nucleoside triphosphates other than ATP. The ATP gamma phosphate is transferred to the NDP beta phosphate via a ping-pong mechanism, using a phosphorylated active-site intermediate. The sequence is that of Nucleoside diphosphate kinase from Halalkalibacterium halodurans (strain ATCC BAA-125 / DSM 18197 / FERM 7344 / JCM 9153 / C-125) (Bacillus halodurans).